We begin with the raw amino-acid sequence, 117 residues long: Non-specific lipid-transfer protein B (117 aa).

A signal peptide spans 1–25 (MAGLVKLSCLVLACMIVAGPIATNA). Intrachain disulfides connect cysteine 29/cysteine 76, cysteine 39/cysteine 53, cysteine 54/cysteine 99, and cysteine 74/cysteine 113.

Belongs to the plant LTP family.

Its function is as follows. Plant non-specific lipid-transfer proteins transfer phospholipids as well as galactolipids across membranes. May play a role in wax or cutin deposition in the cell walls of expanding epidermal cells and certain secretory tissues. The sequence is that of Non-specific lipid-transfer protein B (WAX9B) from Brassica oleracea var. italica (Broccoli).